The chain runs to 329 residues: tRNA N6-adenosine threonylcarbamoyltransferase (329 aa).

The Fe cation site is built by histidine 108, histidine 112, and tyrosine 129. Residues 129–133, aspartate 161, glutamate 182, and serine 261 each bind substrate; that span reads YVSGG. Position 289 (aspartate 289) interacts with Fe cation.

It belongs to the KAE1 / TsaD family. Fe(2+) is required as a cofactor.

It localises to the cytoplasm. The catalysed reaction is L-threonylcarbamoyladenylate + adenosine(37) in tRNA = N(6)-L-threonylcarbamoyladenosine(37) in tRNA + AMP + H(+). Its function is as follows. Required for the formation of a threonylcarbamoyl group on adenosine at position 37 (t(6)A37) in tRNAs that read codons beginning with adenine. Is probably involved in the transfer of the threonylcarbamoyl moiety of threonylcarbamoyl-AMP (TC-AMP) to the N6 group of A37. The protein is tRNA N6-adenosine threonylcarbamoyltransferase of Ignicoccus hospitalis (strain KIN4/I / DSM 18386 / JCM 14125).